The sequence spans 106 residues: CRISPR-associated endoribonuclease Cas2 (106 aa).

D22 is a binding site for Mg(2+).

It belongs to the CRISPR-associated endoribonuclease Cas2 protein family. Homodimer, forms a heterotetramer with a Cas1 homodimer. Mg(2+) serves as cofactor.

Its function is as follows. CRISPR (clustered regularly interspaced short palindromic repeat), is an adaptive immune system that provides protection against mobile genetic elements (viruses, transposable elements and conjugative plasmids). CRISPR clusters contain sequences complementary to antecedent mobile elements and target invading nucleic acids. CRISPR clusters are transcribed and processed into CRISPR RNA (crRNA). Functions as a ssRNA-specific endoribonuclease. Involved in the integration of spacer DNA into the CRISPR cassette. The polypeptide is CRISPR-associated endoribonuclease Cas2 (Fusobacterium nucleatum subsp. nucleatum (strain ATCC 25586 / DSM 15643 / BCRC 10681 / CIP 101130 / JCM 8532 / KCTC 2640 / LMG 13131 / VPI 4355)).